The sequence spans 83 residues: Protein FAM240A (83 aa).

It belongs to the FAM240 family.

The polypeptide is Protein FAM240A (Homo sapiens (Human)).